A 354-amino-acid polypeptide reads, in one-letter code: Uroporphyrinogen decarboxylase (354 aa).

Substrate contacts are provided by residues 27-31, Asp-77, Tyr-154, Ser-209, and His-327; that span reads RQAGR.

Belongs to the uroporphyrinogen decarboxylase family. As to quaternary structure, homodimer.

Its subcellular location is the cytoplasm. It catalyses the reaction uroporphyrinogen III + 4 H(+) = coproporphyrinogen III + 4 CO2. It participates in porphyrin-containing compound metabolism; protoporphyrin-IX biosynthesis; coproporphyrinogen-III from 5-aminolevulinate: step 4/4. Catalyzes the decarboxylation of four acetate groups of uroporphyrinogen-III to yield coproporphyrinogen-III. The polypeptide is Uroporphyrinogen decarboxylase (Pseudoalteromonas translucida (strain TAC 125)).